The chain runs to 128 residues: Large ribosomal subunit protein eL31 (128 aa).

It belongs to the eukaryotic ribosomal protein eL31 family.

This chain is Large ribosomal subunit protein eL31 (RpL31), found in Drosophila virilis (Fruit fly).